Reading from the N-terminus, the 1476-residue chain is Copper-transporting ATPase 1 (1476 aa).

Residues 1–642 lie on the Cytoplasmic side of the membrane; the sequence is MEPSMDVNSV…HKREIKQWRS (642 aa). HMA domains are found at residues 8-74 and 85-151; these read NSVT…FDAL and TDTL…LETG. Cu(+)-binding residues include threonine 18, cysteine 19, and cysteine 22. The residue at position 152 (threonine 152) is a Phosphothreonine. 2 HMA domains span residues 171-237 and 276-342; these read VVLK…FPAF and STAT…PGQY. Cu(+) contacts are provided by cysteine 182, cysteine 185, cysteine 287, and cysteine 290. Phosphothreonine is present on threonine 326. 4 positions are modified to phosphoserine: serine 338, serine 352, serine 356, and serine 361. 3 HMA domains span residues 376 to 442, 478 to 544, and 554 to 620; these read QETV…FDAV, SKCY…FGAT, and GILK…FEAS. Cysteine 387, cysteine 390, cysteine 489, cysteine 492, cysteine 565, and cysteine 568 together coordinate Cu(+). The helical transmembrane segment at 643–665 threads the bilayer; sequence SFLVSLFFCTPVMGLMMYMMAME. N-linked (GlcNAc...) asparagine glycosylation is found at asparagine 674 and asparagine 685. The next 3 membrane-spanning stretches (helical) occupy residues 695-717, 736-760, and 770-788; these read ILPG…QFFG, MDVL…VAMY, and SFDT…RWLE. Asparagine 887 is a glycosylation site (N-linked (GlcNAc...) asparagine). The chain crosses the membrane as a helical span at residues 930-952; it reads YFVPFIVLVSIATLLVWIIIGFQ. Asparagine 953 carries an N-linked (GlcNAc...) asparagine glycan. A helical transmembrane segment spans residues 978 to 998; sequence AFQASITVLCIACPCSLGLAT. The active-site 4-aspartylphosphate intermediate is aspartate 1034. Asparagine 1130 and asparagine 1134 each carry an N-linked (GlcNAc...) asparagine glycan. 2 helical membrane passes run 1347–1373 and 1379–1397; these read INFL…IGLV and GSAA…SLFL. Serine 1420 and serine 1422 each carry phosphoserine. Asparagine 1448 is a glycosylation site (N-linked (GlcNAc...) asparagine). Residues serine 1450, serine 1453, serine 1456, serine 1459, serine 1463, serine 1466, and serine 1476 each carry the phosphoserine modification.

This sequence belongs to the cation transport ATPase (P-type) (TC 3.A.3) family. In terms of assembly, monomer. Interacts with PDZD11. Interacts with ATOX1 and COMMD1. Interacts with TYRP1. Directly interacts with SOD3; this interaction is copper-dependent and is required for SOD3 activity. As to expression, expressed in most tissues except liver.

Its subcellular location is the golgi apparatus. The protein localises to the trans-Golgi network membrane. It localises to the cell membrane. It carries out the reaction Cu(+)(in) + ATP + H2O = Cu(+)(out) + ADP + phosphate + H(+). Functionally, may function in the export of copper from the cytoplasm to an intracellular organelle. It may serve as well for the export of other metals. In Cricetulus griseus (Chinese hamster), this protein is Copper-transporting ATPase 1 (ATP7A).